The primary structure comprises 52 residues: Large ribosomal subunit protein bL33 (52 aa).

This sequence belongs to the bacterial ribosomal protein bL33 family.

The protein is Large ribosomal subunit protein bL33 of Anaeromyxobacter sp. (strain Fw109-5).